The chain runs to 232 residues: Orotate phosphoribosyltransferase (232 aa).

5-phospho-alpha-D-ribose 1-diphosphate is bound by residues Arg107, Lys108, Lys111, His113, and 133–141; that span reads EDLTTAGGS. Thr137 contacts orotate.

Belongs to the purine/pyrimidine phosphoribosyltransferase family. PyrE subfamily. Homodimer. Mg(2+) serves as cofactor.

The enzyme catalyses orotidine 5'-phosphate + diphosphate = orotate + 5-phospho-alpha-D-ribose 1-diphosphate. It participates in pyrimidine metabolism; UMP biosynthesis via de novo pathway; UMP from orotate: step 1/2. Catalyzes the transfer of a ribosyl phosphate group from 5-phosphoribose 1-diphosphate to orotate, leading to the formation of orotidine monophosphate (OMP). The polypeptide is Orotate phosphoribosyltransferase (Agrobacterium fabrum (strain C58 / ATCC 33970) (Agrobacterium tumefaciens (strain C58))).